The sequence spans 548 residues: Fumarate hydratase class I, anaerobic (548 aa).

A [4Fe-4S] cluster-binding site is contributed by cysteine 105. Lysine 192 bears the N6-acetyllysine mark. Residues cysteine 224 and cysteine 318 each contribute to the [4Fe-4S] cluster site.

The protein belongs to the class-I fumarase family. Homodimer. [4Fe-4S] cluster serves as cofactor.

The enzyme catalyses (S)-malate = fumarate + H2O. It carries out the reaction (S,S)-tartrate = oxaloacetate + H2O. Catalyzes the reversible hydration of fumarate to (S)-malate. Functions in the generation of fumarate for use as an anaerobic electron acceptor. To a lesser extent, also displays D-tartrate dehydratase activity, but is not able to convert (R)-malate, L-tartrate or meso-tartrate. Is required for anaerobic growth on D-tartrate. The polypeptide is Fumarate hydratase class I, anaerobic (Escherichia coli (strain K12)).